The following is a 426-amino-acid chain: Trigger factor (426 aa).

Residues 160-240 (GDTVIGDVTK…IKEVKHLELP (81 aa)) enclose the PPIase FKBP-type domain.

It belongs to the FKBP-type PPIase family. Tig subfamily.

It is found in the cytoplasm. The enzyme catalyses [protein]-peptidylproline (omega=180) = [protein]-peptidylproline (omega=0). Functionally, involved in protein export. Acts as a chaperone by maintaining the newly synthesized protein in an open conformation. Functions as a peptidyl-prolyl cis-trans isomerase. This is Trigger factor from Chlorobaculum tepidum (strain ATCC 49652 / DSM 12025 / NBRC 103806 / TLS) (Chlorobium tepidum).